The sequence spans 85 residues: U4-theraphotoxin-Hhn1o (85 aa).

A signal peptide spans 1 to 22; that stretch reads MKVTLIAILTCAAVLVLHTTAA. The propeptide occupies 23 to 48; it reads EELEAESQLMEVGMPDTELAAVDEER. Intrachain disulfides connect C52/C66, C56/C77, and C71/C82.

Belongs to the neurotoxin 12 (Hwtx-2) family. 02 (Hwtx-2) subfamily. As to expression, expressed by the venom gland.

The protein resides in the secreted. Postsynaptic neurotoxin. The chain is U4-theraphotoxin-Hhn1o from Cyriopagopus hainanus (Chinese bird spider).